Reading from the N-terminus, the 414-residue chain is Esterase FrsA (414 aa).

It belongs to the FrsA family.

It carries out the reaction a carboxylic ester + H2O = an alcohol + a carboxylate + H(+). Catalyzes the hydrolysis of esters. The polypeptide is Esterase FrsA (Escherichia coli O127:H6 (strain E2348/69 / EPEC)).